A 215-amino-acid polypeptide reads, in one-letter code: Thymidylate kinase (215 aa).

12-19 (GIDGAGKS) provides a ligand contact to ATP.

Belongs to the thymidylate kinase family.

It carries out the reaction dTMP + ATP = dTDP + ADP. Its function is as follows. Phosphorylation of dTMP to form dTDP in both de novo and salvage pathways of dTTP synthesis. The sequence is that of Thymidylate kinase from Albidiferax ferrireducens (strain ATCC BAA-621 / DSM 15236 / T118) (Rhodoferax ferrireducens).